Here is a 98-residue protein sequence, read N- to C-terminus: DNA-binding protein Fis (98 aa).

A DNA-binding region (H-T-H motif) is located at residues 74–93; that stretch reads QTRAATMMGINRGTLRKKLK.

This sequence belongs to the transcriptional regulatory Fis family. In terms of assembly, homodimer.

Its function is as follows. Activates ribosomal RNA transcription. Plays a direct role in upstream activation of rRNA promoters. The protein is DNA-binding protein Fis of Photobacterium profundum (strain SS9).